The primary structure comprises 492 residues: Solute carrier family 2, facilitated glucose transporter member 1 (492 aa).

Methionine 1 is modified (N-acetylmethionine). Residues 1–11 are Cytoplasmic-facing; sequence MEPSSKKVTGR. Residues 12–33 traverse the membrane as a helical segment; sequence LMLAVGGAVLGSLQFGYNTGVI. Topologically, residues 34 to 66 are extracellular; that stretch reads NAPQKVIEEFYNQTWIHRYGERILPTTLTTLWS. Residue asparagine 45 is glycosylated (N-linked (GlcNAc...) asparagine). A helical membrane pass occupies residues 67–87; it reads LSVAIFSVGGMIGSFSVGLFV. The Cytoplasmic portion of the chain corresponds to 88–90; it reads NRF. A helical membrane pass occupies residues 91–112; it reads GRRNSMLMMNLLAFVSAVLMGF. The Extracellular segment spans residues 113–120; the sequence is SKLAKSFE. A helical transmembrane segment spans residues 121-144; the sequence is MLILGRFIIGVYCGLTTGFVPMYV. The Cytoplasmic segment spans residues 145-155; it reads GEVSPTALRGA. Residues 156 to 176 form a helical membrane-spanning segment; it reads LGTLHQLGIVVGILIAQVFGL. Glutamine 161 contributes to the D-glucose binding site. At 177 to 185 the chain is on the extracellular side; sequence DSIMGNEDL. The helical transmembrane segment at 186 to 206 threads the bilayer; the sequence is WPLLLSVIFVPALLQCIVLPL. The Cytoplasmic segment spans residues 207–271; it reads CPESPRFLLI…LFRSPAYRQP (65 aa). At serine 226 the chain carries Phosphoserine. A helical transmembrane segment spans residues 272-293; that stretch reads ILSAVVLQLSQQLSGINAVFYY. Residues 282–283 and asparagine 288 each bind D-glucose; that span reads QQ. At 294–306 the chain is on the extracellular side; it reads STSIFEKAGVQQP. A helical membrane pass occupies residues 307 to 328; the sequence is VYATIGSGIVNTAFTVVSLFVV. Asparagine 317 provides a ligand contact to D-glucose. At 329–334 the chain is on the cytoplasmic side; the sequence is ERAGRR. The chain crosses the membrane as a helical span at residues 335–355; sequence TLHLIGLAGMAACAVLMTIAL. The Extracellular segment spans residues 356–365; the sequence is ALLEQLPWMS. Residues 366 to 388 form a helical membrane-spanning segment; sequence YLSIVAIFGFVAFFEVGPGPIPW. D-glucose contacts are provided by glutamate 380 and tryptophan 388. The Cytoplasmic segment spans residues 389–401; it reads FIVAELFSQGPRP. A helical transmembrane segment spans residues 402–422; sequence AAVAVAGFSNWTSNFIVGMCF. Topologically, residues 423-429 are extracellular; the sequence is QYVEQLC. The chain crosses the membrane as a helical span at residues 430 to 450; that stretch reads GPYVFIIFTVLLVLFFIFTYF. Over 451-492 the chain is Cytoplasmic; the sequence is KVPETKGRTFDEIASGFRQGGASQSDKTPEELFHPLGADSQV. Serine 465 is modified (phosphoserine). Residues 468–492 are disordered; that stretch reads RQGGASQSDKTPEELFHPLGADSQV. A Phosphothreonine modification is found at threonine 478. Position 490 is a phosphoserine (serine 490).

The protein belongs to the major facilitator superfamily. Sugar transporter (TC 2.A.1.1) family. Glucose transporter subfamily. As to quaternary structure, found in a complex with ADD2, DMTN and SLC2A1. Interacts (via C-terminus cytoplasmic region) with DMTN. Interacts with SNX27; the interaction is required when endocytosed to prevent degradation in lysosomes and promote recycling to the plasma membrane. Interacts with GIPC (via PDZ domain). Interacts with STOM. Interacts with SGTA (via Gln-rich region). Interacts with BSG. Interacts with SMIM43; the interaction may promote SLC2A1-mediated glucose transport to meet the energy needs of mesendoderm differentiation. In terms of processing, phosphorylation at Ser-226 by PKC promotes glucose uptake by increasing cell membrane localization.

The protein localises to the cell membrane. It localises to the photoreceptor inner segment. The enzyme catalyses D-glucose(out) = D-glucose(in). The uptake of glucose is inhibited by cytochalasin B. Glucose uptake is increased in response to phorbol ester 12-O-tetradecanoylphorbol-13-acetate (TPA) treatment: TPA-induced glucose uptake requires phosphorylation at Ser-226. In terms of biological role, facilitative glucose transporter, which is responsible for constitutive or basal glucose uptake. Has a very broad substrate specificity; can transport a wide range of aldoses including both pentoses and hexoses. Most important energy carrier of the brain: present at the blood-brain barrier and assures the energy-independent, facilitative transport of glucose into the brain. In association with BSG and NXNL1, promotes retinal cone survival by increasing glucose uptake into photoreceptors. Required for mesendoderm differentiation. The protein is Solute carrier family 2, facilitated glucose transporter member 1 of Oryctolagus cuniculus (Rabbit).